Here is a 91-residue protein sequence, read N- to C-terminus: Sec-independent protein translocase protein TatAt (91 aa).

A helical membrane pass occupies residues 9–29 (FPGLPGGPELLVVLLIVVLLF). Residues 48 to 91 (FQRGREEIEDELQDMTGDDDEDDATSESSADSVSTDSVSTESSN) are disordered. A compositionally biased stretch (acidic residues) spans 54–72 (EIEDELQDMTGDDDEDDAT). A compositionally biased stretch (low complexity) spans 73 to 91 (SESSADSVSTDSVSTESSN).

Belongs to the TatA/E family. Forms a complex with TatC. Cytoplasmic and membrane-bound TatA form high-molecular-weight complexes.

The protein resides in the cell membrane. It is found in the cytoplasm. Its function is as follows. Part of the twin-arginine translocation (Tat) system that transports large folded proteins containing a characteristic twin-arginine motif in their signal peptide across membranes. TatA could form the protein-conducting channel of the Tat system. This chain is Sec-independent protein translocase protein TatAt, found in Haloferax volcanii (strain ATCC 29605 / DSM 3757 / JCM 8879 / NBRC 14742 / NCIMB 2012 / VKM B-1768 / DS2) (Halobacterium volcanii).